Reading from the N-terminus, the 654-residue chain is tRNA 5-methylaminomethyl-2-thiouridine biosynthesis bifunctional protein MnmC (654 aa).

The interval 1-236 is tRNA (mnm(5)s(2)U34)-methyltransferase; that stretch reads MSTLLQHAQI…KWEVMSGAYV (236 aa). The FAD-dependent cmnm(5)s(2)U34 oxidoreductase stretch occupies residues 262-654; that stretch reads IGAGLAGSTT…FALRRLIRGK (393 aa).

The protein in the N-terminal section; belongs to the methyltransferase superfamily. tRNA (mnm(5)s(2)U34)-methyltransferase family. In the C-terminal section; belongs to the DAO family. Requires FAD as cofactor.

Its subcellular location is the cytoplasm. It catalyses the reaction 5-aminomethyl-2-thiouridine(34) in tRNA + S-adenosyl-L-methionine = 5-methylaminomethyl-2-thiouridine(34) in tRNA + S-adenosyl-L-homocysteine + H(+). Its function is as follows. Catalyzes the last two steps in the biosynthesis of 5-methylaminomethyl-2-thiouridine (mnm(5)s(2)U) at the wobble position (U34) in tRNA. Catalyzes the FAD-dependent demodification of cmnm(5)s(2)U34 to nm(5)s(2)U34, followed by the transfer of a methyl group from S-adenosyl-L-methionine to nm(5)s(2)U34, to form mnm(5)s(2)U34. The protein is tRNA 5-methylaminomethyl-2-thiouridine biosynthesis bifunctional protein MnmC of Pseudomonas putida (strain GB-1).